A 241-amino-acid polypeptide reads, in one-letter code: Demethylmenaquinone methyltransferase (241 aa).

Residues threonine 60, aspartate 81, and 106-107 each bind S-adenosyl-L-methionine; that span reads DA.

The protein belongs to the class I-like SAM-binding methyltransferase superfamily. MenG/UbiE family.

The enzyme catalyses a 2-demethylmenaquinol + S-adenosyl-L-methionine = a menaquinol + S-adenosyl-L-homocysteine + H(+). Its pathway is quinol/quinone metabolism; menaquinone biosynthesis; menaquinol from 1,4-dihydroxy-2-naphthoate: step 2/2. Its function is as follows. Methyltransferase required for the conversion of demethylmenaquinol (DMKH2) to menaquinol (MKH2). This Staphylococcus aureus (strain MRSA252) protein is Demethylmenaquinone methyltransferase.